The following is a 139-amino-acid chain: Ribulose bisphosphate carboxylase small subunit (139 aa).

The protein belongs to the RuBisCO small chain family. Heterohexadecamer of 8 large and 8 small subunits.

It localises to the plastid. Its subcellular location is the chloroplast. RuBisCO catalyzes two reactions: the carboxylation of D-ribulose 1,5-bisphosphate, the primary event in carbon dioxide fixation, as well as the oxidative fragmentation of the pentose substrate in the photorespiration process. Both reactions occur simultaneously and in competition at the same active site. Although the small subunit is not catalytic it is essential for maximal activity. In Ectocarpus siliculosus (Brown alga), this protein is Ribulose bisphosphate carboxylase small subunit.